Here is a 247-residue protein sequence, read N- to C-terminus: UDP-2,3-diacylglucosamine hydrolase (247 aa).

Residues D8, H10, D41, N79, and H114 each coordinate Mn(2+). A substrate-binding site is contributed by 79–80 (NR). Substrate contacts are provided by D122, S160, D171, R174, and H202. Positions 202 and 204 each coordinate Mn(2+).

The protein belongs to the LpxH family. It depends on Mn(2+) as a cofactor.

The protein localises to the cell inner membrane. The enzyme catalyses UDP-2-N,3-O-bis[(3R)-3-hydroxytetradecanoyl]-alpha-D-glucosamine + H2O = 2-N,3-O-bis[(3R)-3-hydroxytetradecanoyl]-alpha-D-glucosaminyl 1-phosphate + UMP + 2 H(+). It participates in glycolipid biosynthesis; lipid IV(A) biosynthesis; lipid IV(A) from (3R)-3-hydroxytetradecanoyl-[acyl-carrier-protein] and UDP-N-acetyl-alpha-D-glucosamine: step 4/6. Functionally, hydrolyzes the pyrophosphate bond of UDP-2,3-diacylglucosamine to yield 2,3-diacylglucosamine 1-phosphate (lipid X) and UMP by catalyzing the attack of water at the alpha-P atom. Involved in the biosynthesis of lipid A, a phosphorylated glycolipid that anchors the lipopolysaccharide to the outer membrane of the cell. This chain is UDP-2,3-diacylglucosamine hydrolase, found in Xanthomonas axonopodis pv. citri (strain 306).